We begin with the raw amino-acid sequence, 193 residues long: Bcl-2-binding component 3 (193 aa).

Disordered regions lie at residues 1 to 32 (MARA…RLMP) and 71 to 131 (ALGG…VEEE). S10 bears the Phosphoserine mark. The short motif at 137 to 151 (IGAQLRRMADDLNAQ) is the BH3 element.

Belongs to the Bcl-2 family. Interacts with MCL1 and BCL2A1. Interacts (via BH3 domain) with BCL2 and BCL2L1/BCL-XL. Interacts (via BH3 domain) with NOL3/ARC (via CARD domain); this interaction prevents BBC3 association with BCL2 and results in CASP8 activation.

The protein resides in the mitochondrion. In terms of biological role, essential mediator of p53/TP53-dependent and p53/TP53-independent apoptosis. Promotes partial unfolding of BCL2L1 and dissociation of BCL2L1 from p53/TP53, releasing the bound p53/TP53 to induce apoptosis. Regulates ER stress-induced neuronal apoptosis. The chain is Bcl-2-binding component 3 (Bbc3) from Rattus norvegicus (Rat).